A 241-amino-acid polypeptide reads, in one-letter code: Probable transcriptional regulatory protein Rpic_2388 (241 aa).

It belongs to the TACO1 family.

Its subcellular location is the cytoplasm. The chain is Probable transcriptional regulatory protein Rpic_2388 from Ralstonia pickettii (strain 12J).